A 111-amino-acid polypeptide reads, in one-letter code: Universal stress protein B (111 aa).

2 helical membrane passes run 1–21 (MIST…NMAR) and 90–110 (FILT…LMIW).

It belongs to the universal stress protein B family.

It is found in the cell inner membrane. The chain is Universal stress protein B from Escherichia coli O45:K1 (strain S88 / ExPEC).